The chain runs to 947 residues: Protein NETWORKED 2D (947 aa).

In terms of domain architecture, NAB spans 10-90 (YSWWWASHIR…ERYDHISTEL (81 aa)). 3 coiled-coil regions span residues 176–205 (KPEAMGEIDKLQKEILALQTEKEFVKSSYE), 247–342 (MTET…HFES), and 375–433 (TALI…VLDK). 2 disordered regions span residues 455-555 (NLHE…DKTD) and 580-620 (EKQG…GEPD). Residues 474-514 (PQKDLEGEKRTLDISEEIKEHQKETGEEKKEAPVKSVKFEQ) show a composition bias toward basic and acidic residues. Residues 525-536 (TIPSTNPDTVLE) show a composition bias toward polar residues. 3 stretches are compositionally biased toward basic and acidic residues: residues 537–555 (STEKVDSDLEKQDASDKTD), 580–589 (EKQGESDKID), and 610–620 (EDQKEKEGEPD). 2 coiled-coil regions span residues 645-684 (RNFKDMKKTLDETKTKMKTENATKDDEIKLLREKMSLLQK) and 744-773 (GQIQSYDTSIEDLQAEISKLEQRRKQDGSS).

This sequence belongs to the NET family.

In terms of biological role, plant-specific actin binding protein. May be part of a membrane-cytoskeletal adapter complex. This Arabidopsis thaliana (Mouse-ear cress) protein is Protein NETWORKED 2D.